Consider the following 943-residue polypeptide: Leucine--tRNA ligase (943 aa).

The short motif at 40-51 (PYPSGAGLHVGH) is the 'HIGH' region element. Residues 717–721 (KMSKS) carry the 'KMSKS' region motif. K720 contacts ATP.

It belongs to the class-I aminoacyl-tRNA synthetase family.

Its subcellular location is the cytoplasm. It carries out the reaction tRNA(Leu) + L-leucine + ATP = L-leucyl-tRNA(Leu) + AMP + diphosphate. The chain is Leucine--tRNA ligase from Bacteroides fragilis (strain ATCC 25285 / DSM 2151 / CCUG 4856 / JCM 11019 / LMG 10263 / NCTC 9343 / Onslow / VPI 2553 / EN-2).